A 335-amino-acid polypeptide reads, in one-letter code: UPF0324 membrane protein LMOf2365_2179 (335 aa).

8 helical membrane-spanning segments follow: residues 10–28 (TFWY…SYFL), 33–55 (FLMI…ALFP), 91–113 (AGWR…VYFL), 123–142 (LAIL…VVAI), 155–177 (VAAT…IYPI), 251–270 (VPWF…FGII), 277–299 (FLVI…NVHL), and 309–331 (PFAA…VLLF).

It belongs to the UPF0324 family.

The protein resides in the cell membrane. The polypeptide is UPF0324 membrane protein LMOf2365_2179 (Listeria monocytogenes serotype 4b (strain F2365)).